The chain runs to 799 residues: Putative aconitate hydratase, mitochondrial (799 aa).

The transit peptide at 1–32 (MVRQLVWQRATASRRLAPKCLSPQQLFARRGL) directs the protein to the mitochondrion. Substrate contacts are provided by residues Q108 and 201–203 (DSH). [4Fe-4S] cluster-binding residues include C399, C462, and C465. R489 and R494 together coordinate substrate. The disordered stretch occupies residues 538–564 (KFRPPQGSDLPSAGFADGNPALQPSAG). 685–686 (AR) contacts substrate.

This sequence belongs to the aconitase/IPM isomerase family.

The protein resides in the mitochondrion. In terms of biological role, has no detectable activity towards cis-acontiate or cis-homoaconitate. The protein is Putative aconitate hydratase, mitochondrial (acoB) of Aspergillus fumigatus (strain ATCC MYA-4609 / CBS 101355 / FGSC A1100 / Af293) (Neosartorya fumigata).